We begin with the raw amino-acid sequence, 185 residues long: ATP-dependent protease subunit HslV (185 aa).

Residue threonine 12 is part of the active site. Na(+) contacts are provided by alanine 168, cysteine 171, and threonine 174.

Belongs to the peptidase T1B family. HslV subfamily. In terms of assembly, a double ring-shaped homohexamer of HslV is capped on each side by a ring-shaped HslU homohexamer. The assembly of the HslU/HslV complex is dependent on binding of ATP.

It is found in the cytoplasm. It carries out the reaction ATP-dependent cleavage of peptide bonds with broad specificity.. Its activity is regulated as follows. Allosterically activated by HslU binding. In terms of biological role, protease subunit of a proteasome-like degradation complex believed to be a general protein degrading machinery. The protein is ATP-dependent protease subunit HslV of Dinoroseobacter shibae (strain DSM 16493 / NCIMB 14021 / DFL 12).